Here is a 321-residue protein sequence, read N- to C-terminus: Meiotic drive suppressor wtf26 (321 aa).

The disordered stretch occupies residues 29–68 (GLLPEYNSEEEGALPTYSDHARSSNPPNTHRENHSSGTTD). The next 6 helical transmembrane spans lie at 73-93 (FLIKLLISFTPIVLLNALAVC), 110-130 (WTLFGFWCLVCTLALIILTYF), 151-171 (EMMIIIWILWLIICCILFGCV), 188-208 (TISAVLFLIVSSVCIPMWTLW), 210-230 (ALSGMLQVLGIHGIIALLVNG), and 243-263 (GYEIEGFVLFFTGNALFLYEM).

This sequence belongs to the WTF family. In terms of assembly, homomer. Interacts with other proteins that exhibit high sequence similarity.

It localises to the spore membrane. The protein resides in the vacuole membrane. Acts as a suppressor component of the dual wtf meiotic drive system, and can suppress but not confer meiotic drive by compatible poisons. Wtf meiotic drive systems promote unequal transmission of alleles from the parental zygote to progeny spores by encoding a poison and an antidote from the same locus; the poison is trans-acting and forms toxic aggregates in all spores within an ascus, wherease the antidote is spore-specific and targets aggregates for degradation by the vacuole. Meiotic drive by wtf systems therefore lead to poisoning of all progeny that do not inherit the dual poison/antidote allele, or express a compatible antidote. This is Meiotic drive suppressor wtf26 from Schizosaccharomyces kambucha (Fission yeast).